The primary structure comprises 603 residues: UvrABC system protein C (603 aa).

One can recognise a GIY-YIG domain in the interval 15-92 (DQPGCYLMKN…IQKHQPYYNI (78 aa)). The UVR domain maps to 197 to 232 (AQVKKQLTARMERAAGQLEFERAAEIRDQLHYIEVT).

This sequence belongs to the UvrC family. As to quaternary structure, interacts with UvrB in an incision complex.

It localises to the cytoplasm. In terms of biological role, the UvrABC repair system catalyzes the recognition and processing of DNA lesions. UvrC both incises the 5' and 3' sides of the lesion. The N-terminal half is responsible for the 3' incision and the C-terminal half is responsible for the 5' incision. In Limosilactobacillus fermentum (strain NBRC 3956 / LMG 18251) (Lactobacillus fermentum), this protein is UvrABC system protein C.